The sequence spans 70 residues: Large ribosomal subunit protein bL31 (70 aa).

Zn(2+) is bound by residues Cys16, Cys18, Cys37, and Cys40.

Belongs to the bacterial ribosomal protein bL31 family. Type A subfamily. Part of the 50S ribosomal subunit. Zn(2+) serves as cofactor.

Binds the 23S rRNA. This Shewanella sp. (strain MR-4) protein is Large ribosomal subunit protein bL31.